Consider the following 45-residue polypeptide: Omega-hexatoxin-Hv2a (45 aa).

3 disulfide bridges follow: Cys-4/Cys-18, Cys-11/Cys-24, and Cys-17/Cys-29.

It belongs to the neurotoxin 15 family. 02 (omega-actx) subfamily. Expressed by the venom gland.

It localises to the secreted. In terms of biological role, potent inhibitor of insect (bee brain), but not mammalian (rat trigeminal neurons), voltage-gated calcium channels (Cav). In vivo, injection into lone star ticks (Amblyomma americanum) induces curling of all eight legs into closed loops, followed by death. The chain is Omega-hexatoxin-Hv2a from Hadronyche versuta (Blue mountains funnel-web spider).